We begin with the raw amino-acid sequence, 199 residues long: Chaperone protein TorD (199 aa).

The protein belongs to the TorD/DmsD family. TorD subfamily.

It is found in the cytoplasm. Functionally, involved in the biogenesis of TorA. Acts on TorA before the insertion of the molybdenum cofactor and, as a result, probably favors a conformation of the apoenzyme that is competent for acquiring the cofactor. The chain is Chaperone protein TorD from Escherichia coli O127:H6 (strain E2348/69 / EPEC).